Reading from the N-terminus, the 130-residue chain is Small ribosomal subunit protein uS8 (130 aa).

Lysine 88 carries the N6-succinyllysine modification.

This sequence belongs to the universal ribosomal protein uS8 family. As to quaternary structure, component of the 40S ribosomal subunit. Part of the small subunit (SSU) processome, composed of more than 70 proteins and the RNA chaperone small nucleolar RNA (snoRNA) U3.

The protein localises to the cytoplasm. Its subcellular location is the nucleus. The protein resides in the nucleolus. Component of the small ribosomal subunit. Part of the small subunit (SSU) processome, first precursor of the small eukaryotic ribosomal subunit. During the assembly of the SSU processome in the nucleolus, many ribosome biogenesis factors, an RNA chaperone and ribosomal proteins associate with the nascent pre-rRNA and work in concert to generate RNA folding, modifications, rearrangements and cleavage as well as targeted degradation of pre-ribosomal RNA by the RNA exosome. Required for proper erythropoiesis. The polypeptide is Small ribosomal subunit protein uS8 (RPS15A) (Pongo abelii (Sumatran orangutan)).